Here is a 197-residue protein sequence, read N- to C-terminus: Molybdenum cofactor guanylyltransferase (197 aa).

GTP contacts are provided by residues 12–14, Lys25, Asn53, Asp71, and Asp101; that span reads LAG. Asp101 serves as a coordination point for Mg(2+).

This sequence belongs to the MobA family. Monomer. It depends on Mg(2+) as a cofactor.

Its subcellular location is the cytoplasm. The enzyme catalyses Mo-molybdopterin + GTP + H(+) = Mo-molybdopterin guanine dinucleotide + diphosphate. Functionally, transfers a GMP moiety from GTP to Mo-molybdopterin (Mo-MPT) cofactor (Moco or molybdenum cofactor) to form Mo-molybdopterin guanine dinucleotide (Mo-MGD) cofactor. This chain is Molybdenum cofactor guanylyltransferase, found in Bordetella pertussis (strain Tohama I / ATCC BAA-589 / NCTC 13251).